The chain runs to 139 residues: Fluoroacetyl-CoA thioesterase (139 aa).

Substrate contacts are provided by residues 40–50 and Gly69; that span reads FATGFMVGLME. Catalysis depends on residues Thr42 and Glu50. Residues Gly69 and 76 to 77 each bind CoA; that span reads HT. His76 is an active-site residue. Arg120 serves as a coordination point for substrate.

As to quaternary structure, homodimer.

It carries out the reaction fluoroacetyl-CoA + H2O = fluoroacetate + CoA + H(+). Hydrolyzes fluoroacetyl-CoA before it can react with citrate synthase, and thus confers fluoroacetate resistance. Cannot use acetyl-CoA as substrate. This chain is Fluoroacetyl-CoA thioesterase (flK), found in Streptantibioticus cattleyicolor (Streptomyces cattleya).